The chain runs to 275 residues: MAALDGLPPLRDVIQRHGLDARKALGQNFLLDLNLTQKVARTAGGLEGMTVFEVGPGPGGLTRAILALGAKKVIAVERDARCLPALAEIADHYPGRLEVIEGDALKADFESLAPEGAVKIIANLPYNVGTQLLVNWLLPKAWPPFWQSLTLMFQKEVGERIVATEDDDHYGRLGVLCGWRTEARMAFDVPPQAFTPPPKVTSTVVHLTPRKNPIPCSVANLEKVTQAAFGQRRKMLRQSLKPLGGESLLVKAGIDPARRAETLSVEEFCLLANSL.

6 residues coordinate S-adenosyl-L-methionine: asparagine 28, leucine 30, glycine 55, glutamate 77, aspartate 103, and asparagine 123.

It belongs to the class I-like SAM-binding methyltransferase superfamily. rRNA adenine N(6)-methyltransferase family. RsmA subfamily.

It is found in the cytoplasm. The catalysed reaction is adenosine(1518)/adenosine(1519) in 16S rRNA + 4 S-adenosyl-L-methionine = N(6)-dimethyladenosine(1518)/N(6)-dimethyladenosine(1519) in 16S rRNA + 4 S-adenosyl-L-homocysteine + 4 H(+). Its function is as follows. Specifically dimethylates two adjacent adenosines (A1518 and A1519) in the loop of a conserved hairpin near the 3'-end of 16S rRNA in the 30S particle. May play a critical role in biogenesis of 30S subunits. In Rhizobium etli (strain CIAT 652), this protein is Ribosomal RNA small subunit methyltransferase A.